An 880-amino-acid polypeptide reads, in one-letter code: Probable LRR receptor-like serine/threonine-protein kinase At2g28960 (880 aa).

The first 24 residues, 1–24 (MEGRRQRLLVFIFGALAITHLVQA), serve as a signal peptide directing secretion. Topologically, residues 25-511 (QPPDQRGFIS…NNNNQTYIVP (487 aa)) are extracellular. Asn180, Asn201, Asn228, Asn254, Asn287, Asn403, Asn430, and Asn441 each carry an N-linked (GlcNAc...) asparagine glycan. 3 LRR repeats span residues 409-430 (RIIS…AFQN), 433-455 (ELRK…LASM), and 457-476 (SLSI…PKLL). N-linked (GlcNAc...) asparagine glycosylation is present at Asn505. The chain crosses the membrane as a helical span at residues 512–532 (VVASVASVLIIIAVLILILVF). Topologically, residues 533 to 880 (KKRRPTQVDS…FTTEINPKAR (348 aa)) are cytoplasmic. Phosphothreonine is present on Thr564. Positions 573–846 (DNFERVLGEG…QVTNELKQCL (274 aa)) constitute a Protein kinase domain. Residues 579-587 (LGEGGFGVV) and Lys601 contribute to the ATP site. Tyr646 bears the Phosphotyrosine mark. Residue Asp698 is the Proton acceptor of the active site. The residue at position 732 (Ser732) is a Phosphoserine. Thr733 and Thr738 each carry phosphothreonine. Position 746 is a phosphotyrosine (Tyr746). The segment at 854-880 (GVREDMGSRSSVEMSTSFTTEINPKAR) is disordered. Polar residues predominate over residues 861 to 880 (SRSSVEMSTSFTTEINPKAR).

Belongs to the protein kinase superfamily. Ser/Thr protein kinase family.

The protein localises to the membrane. The enzyme catalyses L-seryl-[protein] + ATP = O-phospho-L-seryl-[protein] + ADP + H(+). It carries out the reaction L-threonyl-[protein] + ATP = O-phospho-L-threonyl-[protein] + ADP + H(+). This Arabidopsis thaliana (Mouse-ear cress) protein is Probable LRR receptor-like serine/threonine-protein kinase At2g28960.